Consider the following 197-residue polypeptide: Xanthine phosphoribosyltransferase (197 aa).

2 residues coordinate xanthine: L20 and N27. Residue 128–132 participates in 5-phospho-alpha-D-ribose 1-diphosphate binding; it reads ANGQA. K156 is a binding site for xanthine.

Belongs to the purine/pyrimidine phosphoribosyltransferase family. Xpt subfamily. As to quaternary structure, homodimer.

It localises to the cytoplasm. It carries out the reaction XMP + diphosphate = xanthine + 5-phospho-alpha-D-ribose 1-diphosphate. It functions in the pathway purine metabolism; XMP biosynthesis via salvage pathway; XMP from xanthine: step 1/1. Converts the preformed base xanthine, a product of nucleic acid breakdown, to xanthosine 5'-monophosphate (XMP), so it can be reused for RNA or DNA synthesis. In Bacillus anthracis (strain A0248), this protein is Xanthine phosphoribosyltransferase.